A 323-amino-acid polypeptide reads, in one-letter code: MIRRITERASGFAKNIPILKSSRFHGESLDSSVSPVLIPGVHVFHCQDAVGIVAKLSDCIAAKGGNILGYDVFVPENNNVFYSRSEFIFDPVKWPRSQVDEDFQTIAQRYGALNSVVRVPSIDPKYKIALLLSKQDHCLVEMLHKWQDGKLPVDITCVISNHERASNTHVMRFLERHGIPYHYVSTTKENKREDDILELVKDTDFLVLARYMQILSGNFLKGYGKDVINIHHGLLPSFKGGYPAKQAFDAGVKLIGATSHFVTEELDSGPIIEQMVESVSHRDNLRSFVQKSEDLEKKCLTRAIKSYCELRVLPYGTNKTVVF.

The transit peptide at 1 to 25 (MIRRITERASGFAKNIPILKSSRFH) directs the protein to the mitochondrion. The ACT domain maps to 41–124 (VHVFHCQDAV…SVVRVPSIDP (84 aa)). Residue Asp267 is part of the active site.

Belongs to the PurU family. In terms of tissue distribution, expressed in leaves, cotyledons, roots, seeds and flowers.

It is found in the mitochondrion. It carries out the reaction (6R)-10-formyltetrahydrofolate + H2O = (6S)-5,6,7,8-tetrahydrofolate + formate + H(+). Its function is as follows. Deformylase involved in photorespiration. Prevents excessive accumulation of 5-formyl tetrahydrofolate (THF), a potent inhibitor of the Gly decarboxylase/Ser hydroxymethyltransferase complex. The polypeptide is Formyltetrahydrofolate deformylase 1, mitochondrial (PURU1) (Arabidopsis thaliana (Mouse-ear cress)).